Consider the following 348-residue polypeptide: L-seryl-tRNA(Sec) kinase (348 aa).

25-32 (GLPAAGKS) is an ATP binding site.

The protein belongs to the L-seryl-tRNA(Sec) kinase family. Mg(2+) is required as a cofactor.

It catalyses the reaction L-seryl-tRNA(Sec) + ATP = O-phospho-L-seryl-tRNA(Sec) + ADP. It participates in aminoacyl-tRNA biosynthesis; selenocysteinyl-tRNA(Sec) biosynthesis; selenocysteinyl-tRNA(Sec) from L-seryl-tRNA(Sec) (archaeal/eukaryal route): step 1/2. Its function is as follows. Specifically phosphorylates seryl-tRNA(Sec) to O-phosphoseryl-tRNA(Sec), an activated intermediate for selenocysteine biosynthesis. This chain is L-seryl-tRNA(Sec) kinase (PSTK), found in Homo sapiens (Human).